We begin with the raw amino-acid sequence, 349 residues long: Glycerol-3-phosphate dehydrogenase [NAD(P)+] (349 aa).

Ser-31, Phe-32, Arg-52, Lys-53, and Lys-126 together coordinate NADPH. Positions 126, 154, and 156 each coordinate sn-glycerol 3-phosphate. Position 158 (Ala-158) interacts with NADPH. Residues Lys-209, Asp-262, Ser-272, Arg-273, and Asn-274 each contribute to the sn-glycerol 3-phosphate site. Lys-209 serves as the catalytic Proton acceptor. NADPH is bound at residue Arg-273. NADPH-binding residues include Val-297 and Glu-299.

This sequence belongs to the NAD-dependent glycerol-3-phosphate dehydrogenase family.

Its subcellular location is the cytoplasm. It catalyses the reaction sn-glycerol 3-phosphate + NAD(+) = dihydroxyacetone phosphate + NADH + H(+). The enzyme catalyses sn-glycerol 3-phosphate + NADP(+) = dihydroxyacetone phosphate + NADPH + H(+). It participates in membrane lipid metabolism; glycerophospholipid metabolism. Its function is as follows. Catalyzes the reduction of the glycolytic intermediate dihydroxyacetone phosphate (DHAP) to sn-glycerol 3-phosphate (G3P), the key precursor for phospholipid synthesis. The sequence is that of Glycerol-3-phosphate dehydrogenase [NAD(P)+] from Clostridium tetani (strain Massachusetts / E88).